Reading from the N-terminus, the 412-residue chain is Lipid droplet organization protein LDO45 (412 aa).

The Cytoplasmic segment spans residues 1-170; sequence MAARNRRKNN…TVEKLNALQN (170 aa). A helical transmembrane segment spans residues 171-191; it reads SLYEVFWIIFIYLNYWFPNVG. The Lumenal portion of the chain corresponds to 192–247; sequence DYVSNTFGQQDSIIIRISLSKSHFRALREKSSQKVQQAVKNIYFCFQEKPYLTAFK. Residues 248–268 traverse the membrane as a helical segment; it reads VSFAIGLVIPCSLLFLIMVST. Residues 269–271 are Cytoplasmic-facing; sequence ATF. Residues 272–292 form a helical membrane-spanning segment; that stretch reads FFFVYLTLFVVIGFFSSLFII. A topological domain (lumenal) is located at residue Pro-293. The helical transmembrane segment at 294-314 threads the bilayer; that stretch reads LLGISFVFAIGVVSFGFCSNM. At 315 to 412 the chain is on the cytoplasmic side; sequence SFKMAQLIYV…NKAGNKFQLS (98 aa). The interval 347-374 is disordered; sequence QEPQEPLSTLRPVSNPTIPSPLRQTARP. Polar residues predominate over residues 357–373; that stretch reads RPVSNPTIPSPLRQTAR.

As to quaternary structure, interacts specifically with the seipin complex FLD1-LDB16. Only a fraction appears to associate with the seipin core components, suggesting that it may be an ancillary subunit of the complex.

The protein resides in the endoplasmic reticulum membrane. The protein localises to the lipid droplet. Involved in lipid droplet (LD) organization. Modulates triglyceride (TAG) storage by reducing DGA1 LD localization. Promotes LD targeting of some proteins, including PDR16. In Saccharomyces cerevisiae (strain ATCC 204508 / S288c) (Baker's yeast), this protein is Lipid droplet organization protein LDO45.